We begin with the raw amino-acid sequence, 532 residues long: Maternal protein exuperantia (532 aa).

Disordered stretches follow at residues 206–251 (CSAS…NAVQ) and 403–491 (TVKP…NGLK). Low complexity-rich tracts occupy residues 220–231 (GSSMVSDSVSIS) and 404–417 (VKPV…NNNN). A compositionally biased stretch (polar residues) spans 454 to 467 (SVSSLPDSTTKTPS). Position 467 is a phosphoserine (serine 467).

Component of the osk RNP complex, which is composed of at least exuperantia (exu), ypsilon schachtel (yps), aret (bruno), cup, and the mRNA of osk. In the sponge body, forms a ribonucleoprotein complex (RNP) containing at least me31B, exu, yps and the mRNA of osk; interactions with exu and yps are RNA dependent.

It localises to the cytoplasm. The protein localises to the cytoplasmic ribonucleoprotein granule. Its function is as follows. Ensures the proper localization of the mRNA of the bicoid gene to the anterior regions of the oocyte thus playing a fundamental role in the establishment of the polarity of the oocyte. May bind the bcd mRNA. This is Maternal protein exuperantia (exu) from Drosophila melanogaster (Fruit fly).